Reading from the N-terminus, the 247-residue chain is tRNA (guanine-N(1)-)-methyltransferase (247 aa).

S-adenosyl-L-methionine is bound by residues G113 and I133–M138.

It belongs to the RNA methyltransferase TrmD family. In terms of assembly, homodimer.

Its subcellular location is the cytoplasm. It carries out the reaction guanosine(37) in tRNA + S-adenosyl-L-methionine = N(1)-methylguanosine(37) in tRNA + S-adenosyl-L-homocysteine + H(+). Functionally, specifically methylates guanosine-37 in various tRNAs. In Vibrio campbellii (strain ATCC BAA-1116), this protein is tRNA (guanine-N(1)-)-methyltransferase.